The chain runs to 511 residues: Maturase K (511 aa).

It belongs to the intron maturase 2 family. MatK subfamily.

It localises to the plastid. The protein resides in the chloroplast. In terms of biological role, usually encoded in the trnK tRNA gene intron. Probably assists in splicing its own and other chloroplast group II introns. This chain is Maturase K, found in Brachypodium sylvaticum (False brome).